Consider the following 149-residue polypeptide: D-aminoacyl-tRNA deacylase (149 aa).

Residues Gly-137–Pro-138 carry the Gly-cisPro motif, important for rejection of L-amino acids motif.

The protein belongs to the DTD family. Homodimer.

Its subcellular location is the cytoplasm. It catalyses the reaction glycyl-tRNA(Ala) + H2O = tRNA(Ala) + glycine + H(+). The enzyme catalyses a D-aminoacyl-tRNA + H2O = a tRNA + a D-alpha-amino acid + H(+). Functionally, an aminoacyl-tRNA editing enzyme that deacylates mischarged D-aminoacyl-tRNAs. Also deacylates mischarged glycyl-tRNA(Ala), protecting cells against glycine mischarging by AlaRS. Acts via tRNA-based rather than protein-based catalysis; rejects L-amino acids rather than detecting D-amino acids in the active site. By recycling D-aminoacyl-tRNA to D-amino acids and free tRNA molecules, this enzyme counteracts the toxicity associated with the formation of D-aminoacyl-tRNA entities in vivo and helps enforce protein L-homochirality. The polypeptide is D-aminoacyl-tRNA deacylase (Thermoanaerobacter pseudethanolicus (strain ATCC 33223 / 39E) (Clostridium thermohydrosulfuricum)).